The sequence spans 523 residues: 11-oxo-beta-amyrin 30-oxidase (523 aa).

The helical transmembrane segment at 9–29 (AIWVVLTVILAAIPIWVCHMV) threads the bilayer. Cys-471 provides a ligand contact to heme.

It belongs to the cytochrome P450 family. The cofactor is heme. In terms of tissue distribution, expressed in roots, stolons and stems. Not detected in leaves.

Its subcellular location is the membrane. The enzyme catalyses 11-oxo-beta-amyrin + 3 reduced [NADPH--hemoprotein reductase] + 3 O2 = glycyrrhetinate + 3 oxidized [NADPH--hemoprotein reductase] + 4 H2O + 4 H(+). It catalyses the reaction 11-oxo-beta-amyrin + reduced [NADPH--hemoprotein reductase] + O2 = 30-hydroxy-11-oxo-beta-amyrin + oxidized [NADPH--hemoprotein reductase] + H2O + H(+). It carries out the reaction 30-hydroxy-11-oxo-beta-amyrin + reduced [NADPH--hemoprotein reductase] + O2 = glycyrrhetaldehyde + oxidized [NADPH--hemoprotein reductase] + 2 H2O + H(+). The catalysed reaction is glycyrrhetaldehyde + reduced [NADPH--hemoprotein reductase] + O2 = glycyrrhetinate + oxidized [NADPH--hemoprotein reductase] + H2O + 2 H(+). Involved in the biosynthesis of Glycyrrhetinic acid (GA), a natural product which exhibits anti-inflammatory activity. Involved in the biosynthesis of the triterpenoid saponin glycyrrhizin. Catalyzes three sequential oxidation steps at C-30 of 11-oxo-beta-amyrin. Also able to catalyze C-30 monohydroxylation of beta-amyrin to produce 30-hydroxy-beta-amyrin. May be also responsible for the oxidation at positions C-22 and C-29 in addition to C-30. This Glycyrrhiza uralensis (Chinese licorice) protein is 11-oxo-beta-amyrin 30-oxidase.